The chain runs to 245 residues: Chloride intracellular channel protein 2 (245 aa).

A required for insertion into the membrane region spans residues 1 to 96; sequence MASLALNTQA…EEFLEKTLAP (96 aa). Residue E25 coordinates glutathione. A G-site motif is present at residues 30 to 33; sequence CPFC. An intrachain disulfide couples C30 to C33. The helical transmembrane segment at 32-52 threads the bilayer; that stretch reads FCQRLFMILWLKGVKFNVTTI. Positions 76–239 constitute a GST C-terminal domain; sequence NKELKTDFIK…PEDKEIENTY (164 aa). H227 is a glutathione binding site.

Belongs to the chloride channel CLIC family. As to quaternary structure, monomer. Interacts with TRAPPC2 and RYR2.

It is found in the cytoplasm. It localises to the membrane. The enzyme catalyses chloride(in) = chloride(out). It carries out the reaction tert-butyl hydroperoxide + 2 glutathione = tert-butanol + glutathione disulfide + H2O. It catalyses the reaction cumene hydroperoxide + 2 glutathione = 2-phenylpropan-2-ol + glutathione disulfide + H2O. In terms of biological role, in the soluble state, catalyzes glutaredoxin-like thiol disulfide exchange reactions with reduced glutathione as electron donor. Displays weak glutathione peroxidase activity. Can insert into membranes and form chloride ion channels. Membrane insertion seems to be redox-regulated and may occur only under oxidizing conditions. Modulates the activity of RYR2 and inhibits calcium influx. This chain is Chloride intracellular channel protein 2, found in Rattus norvegicus (Rat).